A 96-amino-acid polypeptide reads, in one-letter code: SAGA-associated factor 11 (96 aa).

The SGF11-type zinc-finger motif lies at 68 to 89 (FHCKNCGRDVSANRFAAHLQRC).

This sequence belongs to the SGF11 family. In terms of assembly, component of the 1.8 MDa SAGA transcription coactivator-HAT complex. SAGA is built of 5 distinct domains with specialized functions. Within the SAGA complex, SUS1, SGF11, SGF73 and UBP8 form an additional subcomplex of SAGA called the DUB module (deubiquitination module). Interacts directly with SGF73, SUS1 and UBP8.

The protein resides in the nucleus. In terms of biological role, functions as a component of the transcription regulatory histone acetylation (HAT) complex SAGA. At the promoters, SAGA is required for recruitment of the basal transcription machinery. It influences RNA polymerase II transcriptional activity through different activities such as TBP interaction and promoter selectivity, interaction with transcription activators, and chromatin modification through histone acetylation and deubiquitination. SAGA acetylates nucleosomal histone H3 to some extent (to form H3K9ac, H3K14ac, H3K18ac and H3K23ac). SAGA interacts with DNA via upstream activating sequences (UASs). Involved in transcriptional regulation of a subset of SAGA-regulated genes. Within the SAGA complex, participates in a subcomplex, that specifically deubiquitinates histones H2B. In Vanderwaltozyma polyspora (strain ATCC 22028 / DSM 70294 / BCRC 21397 / CBS 2163 / NBRC 10782 / NRRL Y-8283 / UCD 57-17) (Kluyveromyces polysporus), this protein is SAGA-associated factor 11.